We begin with the raw amino-acid sequence, 1223 residues long: WD repeat-containing protein 11 (1223 aa).

WD repeat units follow at residues 59-108 and 111-154; these read KHKA…AQCE and EHVK…KLWK. A phosphoserine mark is found at S205 and S209. Residues 354–393 form a WD 3 repeat; it reads KTVRPFSMVCCPVNENAAALIVSDGRVMIWELKSAVCSRN. 2 positions are modified to phosphoserine: S401 and S405. 6 WD repeats span residues 470–509, 565–604, 707–744, 746–786, 792–830, and 892–939; these read RMCP…LHKE, NDES…LLRE, GSMG…SRGI, THRS…MVSS, NVTF…TCFR, and ALSN…HSLS.

Component of the complex WDR11 composed of C17orf75, FAM91A1 and WDR11; FAM91A1 and WDR11 are required for proper location of the complex. Interacts with GLI3; the interaction associateS EMX1 with GLI3. Interacts with TBC1D23; this interaction may be indirect and recruits TBC1D23 to AP-1-derived vesicles. Interacts (via the N-terminal and the central portion of the protein) with EMX1. Broadly expressed in various organs including brain, eye,ear, lung, heart, kideny and gonads. Cerebral cortex. The entire developing central nervous system, except for the spinal cord, reveals expression. Expressed in the neuroepithelium, including the diencephalic region that gives rise to hypothalamic neurons. In the adult brain, intense expression is restricted to the olfactory bulb, the olfaction-related piriform cortex, the granule cell layer of the cerebellum, and neurons of the hippocampal formation. The brain demonstrated expression scattered throughout the hypothalamus, sometimes in clusters of neurons.

The protein localises to the cytoplasm. Its subcellular location is the cytoskeleton. The protein resides in the cilium basal body. It localises to the nucleus. It is found in the cilium axoneme. The protein localises to the cytoplasmic vesicle. Its subcellular location is the golgi apparatus. The protein resides in the trans-Golgi network. Its function is as follows. Involved in the Hedgehog (Hh) signaling pathway, is essential for normal ciliogenesis. Regulates the proteolytic processing of GLI3 and cooperates with the transcription factor EMX1 in the induction of downstream Hh pathway gene expression and gonadotropin-releasing hormone production. WDR11 complex facilitates the tethering of Adaptor protein-1 complex (AP-1)-derived vesicles. WDR11 complex acts together with TBC1D23 to facilitate the golgin-mediated capture of vesicles generated using AP-1. The chain is WD repeat-containing protein 11 (Wdr11) from Mus musculus (Mouse).